The primary structure comprises 90 residues: Small ribosomal subunit protein uS15 (90 aa).

Belongs to the universal ribosomal protein uS15 family. As to quaternary structure, part of the 30S ribosomal subunit. Forms a bridge to the 50S subunit in the 70S ribosome, contacting the 23S rRNA.

In terms of biological role, one of the primary rRNA binding proteins, it binds directly to 16S rRNA where it helps nucleate assembly of the platform of the 30S subunit by binding and bridging several RNA helices of the 16S rRNA. Its function is as follows. Forms an intersubunit bridge (bridge B4) with the 23S rRNA of the 50S subunit in the ribosome. The protein is Small ribosomal subunit protein uS15 of Campylobacter concisus (strain 13826).